The sequence spans 467 residues: Acyl-lipid (8-3)-desaturase B (467 aa).

The 78-residue stretch at 12–89 (LKLYTWDEVS…IKQYEIGYIS (78 aa)) folds into the Cytochrome b5 heme-binding domain. Residues His-47 and His-70 each coordinate heme. Helical transmembrane passes span 123–143 (VSVG…VTYY) and 152–172 (FWLN…FGLH). Positions 175–179 (HDACH) match the Histidine box-1 motif. A helical transmembrane segment spans residues 187 to 207 (MTWKILGATFDLFAGASFYAW). A Histidine box-2 motif is present at residues 211–216 (HVIGHH). Helical transmembrane passes span 293–313 (AIFI…PLIY) and 317–337 (FSHL…YLAI). The Histidine box-3 motif lies at 400-404 (QVIHH).

It belongs to the fatty acid desaturase type 1 family. Fe(2+) serves as cofactor.

Its subcellular location is the membrane. It carries out the reaction an (8Z,11Z,14Z)-icosatrienoyl-containing glycerolipid + 2 Fe(II)-[cytochrome b5] + O2 + 2 H(+) = (5Z,8Z,11Z,14Z)-eicosatetraenoyl-containing glycerolipid + 2 Fe(III)-[cytochrome b5] + 2 H2O. It catalyses the reaction an (8Z,11Z,14Z,17Z)-eicosatetraenoyl-containing glycerolipid + 2 Fe(II)-[cytochrome b5] + O2 + 2 H(+) = a (5Z,8Z,11Z,14Z,17Z)-eicosapentaenoyl-containing glycerolipid + 2 Fe(III)-[cytochrome b5] + 2 H2O. Its function is as follows. Fatty acid desaturase that introduces a cis double bond at the 5-position in 18-carbon polyunsaturated fatty acids. This is Acyl-lipid (8-3)-desaturase B (fadB) from Dictyostelium discoideum (Social amoeba).